Consider the following 233-residue polypeptide: Large ribosomal subunit protein uL1 (233 aa).

This sequence belongs to the universal ribosomal protein uL1 family. Part of the 50S ribosomal subunit.

In terms of biological role, binds directly to 23S rRNA. The L1 stalk is quite mobile in the ribosome, and is involved in E site tRNA release. Functionally, protein L1 is also a translational repressor protein, it controls the translation of the L11 operon by binding to its mRNA. The polypeptide is Large ribosomal subunit protein uL1 (Novosphingobium aromaticivorans (strain ATCC 700278 / DSM 12444 / CCUG 56034 / CIP 105152 / NBRC 16084 / F199)).